Consider the following 583-residue polypeptide: Radixin (583 aa).

Positions 5–295 constitute an FERM domain; sequence INVRVTTMDA…GNHELYMRRR (291 aa). Residues 60-63 and Lys278 each bind a 1,2-diacyl-sn-glycero-3-phospho-(1D-myo-inositol); that span reads KLNK. 2 disordered regions span residues 310-336 and 436-527; these read REEK…AEKE and KKKE…VKKQ. Basic and acidic residues-rich tracts occupy residues 436 to 447 and 455 to 464; these read KKKEEEASEWQH and DLEKTKEELK. Over residues 469-480 the composition is skewed to pro residues; it reads APPPPPPPPVIP. 2 stretches are compositionally biased toward basic and acidic residues: residues 483–492 and 506–525; these read ENEHDEHDEN and MNHR…ERVK.

It is found in the cell membrane. It localises to the cytoplasm. The protein resides in the cytoskeleton. Its function is as follows. Probably plays a crucial role in the binding of the barbed end of actin filaments to the plasma membrane. The chain is Radixin (RDX) from Gallus gallus (Chicken).